A 1217-amino-acid polypeptide reads, in one-letter code: DNA-directed RNA polymerase subunit beta' (1217 aa).

Zn(2+) is bound by residues C60, C62, C75, and C78. D449, D451, and D453 together coordinate Mg(2+). Zn(2+)-binding residues include C821, C895, C902, and C905.

Belongs to the RNA polymerase beta' chain family. In terms of assembly, the RNAP catalytic core consists of 2 alpha, 1 beta, 1 beta' and 1 omega subunit. When a sigma factor is associated with the core the holoenzyme is formed, which can initiate transcription. Mg(2+) serves as cofactor. It depends on Zn(2+) as a cofactor.

The enzyme catalyses RNA(n) + a ribonucleoside 5'-triphosphate = RNA(n+1) + diphosphate. Its function is as follows. DNA-dependent RNA polymerase catalyzes the transcription of DNA into RNA using the four ribonucleoside triphosphates as substrates. This Lactobacillus acidophilus (strain ATCC 700396 / NCK56 / N2 / NCFM) protein is DNA-directed RNA polymerase subunit beta'.